The primary structure comprises 138 residues: ATP synthase epsilon chain (138 aa).

The protein belongs to the ATPase epsilon chain family. In terms of assembly, F-type ATPases have 2 components, CF(1) - the catalytic core - and CF(0) - the membrane proton channel. CF(1) has five subunits: alpha(3), beta(3), gamma(1), delta(1), epsilon(1). CF(0) has three main subunits: a, b and c.

Its subcellular location is the cell membrane. Its function is as follows. Produces ATP from ADP in the presence of a proton gradient across the membrane. This chain is ATP synthase epsilon chain, found in Streptococcus equinus (Streptococcus bovis).